The sequence spans 390 residues: Sulfate adenylyltransferase (390 aa).

This sequence belongs to the sulfate adenylyltransferase family.

The enzyme catalyses sulfate + ATP + H(+) = adenosine 5'-phosphosulfate + diphosphate. It functions in the pathway sulfur metabolism; hydrogen sulfide biosynthesis; sulfite from sulfate: step 1/3. The protein is Sulfate adenylyltransferase (sat) of Synechocystis sp. (strain ATCC 27184 / PCC 6803 / Kazusa).